The sequence spans 66 residues: DNA-directed RNA polymerase subunit omega (66 aa).

Belongs to the RNA polymerase subunit omega family. In terms of assembly, the RNAP catalytic core consists of 2 alpha, 1 beta, 1 beta' and 1 omega subunit. When a sigma factor is associated with the core the holoenzyme is formed, which can initiate transcription.

It catalyses the reaction RNA(n) + a ribonucleoside 5'-triphosphate = RNA(n+1) + diphosphate. Functionally, promotes RNA polymerase assembly. Latches the N- and C-terminal regions of the beta' subunit thereby facilitating its interaction with the beta and alpha subunits. The protein is DNA-directed RNA polymerase subunit omega of Bacillus licheniformis (strain ATCC 14580 / DSM 13 / JCM 2505 / CCUG 7422 / NBRC 12200 / NCIMB 9375 / NCTC 10341 / NRRL NRS-1264 / Gibson 46).